A 184-amino-acid polypeptide reads, in one-letter code: Photosystem I assembly protein Ycf4 (184 aa).

2 consecutive transmembrane segments (helical) span residues Phe-22 to Ser-42 and Ile-57 to Ser-77.

This sequence belongs to the Ycf4 family.

The protein resides in the plastid. Its subcellular location is the chloroplast thylakoid membrane. Its function is as follows. Seems to be required for the assembly of the photosystem I complex. The polypeptide is Photosystem I assembly protein Ycf4 (Capsella bursa-pastoris (Shepherd's purse)).